Reading from the N-terminus, the 356-residue chain is Histidinol-phosphate aminotransferase (356 aa).

K214 is subject to N6-(pyridoxal phosphate)lysine.

This sequence belongs to the class-II pyridoxal-phosphate-dependent aminotransferase family. Histidinol-phosphate aminotransferase subfamily. As to quaternary structure, homodimer. The cofactor is pyridoxal 5'-phosphate.

It carries out the reaction L-histidinol phosphate + 2-oxoglutarate = 3-(imidazol-4-yl)-2-oxopropyl phosphate + L-glutamate. It participates in amino-acid biosynthesis; L-histidine biosynthesis; L-histidine from 5-phospho-alpha-D-ribose 1-diphosphate: step 7/9. This chain is Histidinol-phosphate aminotransferase, found in Escherichia coli O17:K52:H18 (strain UMN026 / ExPEC).